Here is a 132-residue protein sequence, read N- to C-terminus: Small ribosomal subunit protein uS8 (132 aa).

This sequence belongs to the universal ribosomal protein uS8 family. As to quaternary structure, part of the 30S ribosomal subunit. Contacts proteins S5 and S12.

One of the primary rRNA binding proteins, it binds directly to 16S rRNA central domain where it helps coordinate assembly of the platform of the 30S subunit. This chain is Small ribosomal subunit protein uS8, found in Streptococcus equi subsp. equi (strain 4047).